The primary structure comprises 356 residues: MSKLWRRGSTSGAMEAPEPGEALELSLAGAHGHGVHKKKHKKHKKKHKKKHHQEEDAGPTQPSPAKPQLKLKIKLGGQVLGTKSVPTFTVIPEGPRSPSPLMVVDNEEEPMEGVPLEQYRAWLDEDSNLSPSPLRDLSGGLGGQEEEEEQRWLDALEKGELDDNGDLKKEINERLLTARQRALLQKARSQPSPMLPLPVAEGCPPPALTEEMLLKREERARKRRLQAARRAEEHKNQTIERLTKTAATSGRGGRGGARGERRGGRAAAPAPMVRYCSGAQGSTLSFPPGVPAPTAVSQRPSPSGPPPRCSVPGCPHPRRYACSRTGQALCSLQCYRINLQMRLGGPEGPGSPLLAT.

Positions 1-71 (MSKLWRRGST…PSPAKPQLKL (71 aa)) are disordered. Residues 33 to 51 (HGVHKKKHKKHKKKHKKKH) are compositionally biased toward basic residues. S97, S99, S127, S130, and S132 each carry phosphoserine. Positions 124-150 (DEDSNLSPSPLRDLSGGLGGQEEEEEQ) are disordered. The stretch at 213 to 245 (LLKREERARKRRLQAARRAEEHKNQTIERLTKT) forms a coiled coil. 2 disordered regions span residues 246–269 (AATS…AAAP) and 286–310 (FPPG…PRCS). An HIT-type zinc finger spans residues 305-336 (PPPRCSVPGCPHPRRYACSRTGQALCSLQCYR).

As to quaternary structure, component of the chromatin remodeling INO80 complex; specifically part of a complex module associated with the helicase ATP-binding and the helicase C-terminal domain of INO80. Interacts with RP9.

The protein localises to the nucleus. It is found in the nucleolus. In terms of biological role, induces growth and cell cycle arrests at the G1 phase of the cell cycle. Proposed core component of the chromatin remodeling INO80 complex which is involved in transcriptional regulation, DNA replication and probably DNA repair. This chain is INO80 complex subunit B (INO80B), found in Homo sapiens (Human).